A 200-amino-acid polypeptide reads, in one-letter code: Integrin beta-1-binding protein 1 (200 aa).

The segment covering 1 to 10 has biased composition (basic residues); that stretch reads MFRKGKKRHS. Residues 1 to 55 form a disordered region; sequence MFRKGKKRHSSSSSQSSEISTKSKSVDSSLGGLSRSSTVASLDTDSTKSSGQSNS. The Nuclear localization signal signature appears at 6-7; it reads KK. Residues 11 to 29 are compositionally biased toward low complexity; it reads SSSSQSSEISTKSKSVDSS. Over residues 34 to 55 the composition is skewed to polar residues; it reads SRSSTVASLDTDSTKSSGQSNS. Residue threonine 38 is modified to Phosphothreonine; by CaMK2. Position 41 is a phosphoserine (serine 41). In terms of domain architecture, PID spans 58 to 200; that stretch reads DTCAEFRIKY…FDSVLTSDKS (143 aa). Residues 136-139 are interaction with KRIT1; that stretch reads YLII. The interaction with ITGB1 stretch occupies residues 139-141; that stretch reads IRM.

As to quaternary structure, found in a complex, at least composed of ITGB1BP1, KRIT1 and RAP1A. Interacts (via C-terminal region) with ITGB1 (via C-terminal cytoplasmic tail); the interaction prevents talin TLN1 binding to ITGB1 and KRIT1 and ITGB1 compete for the same binding site. Interacts with KRIT1 (via N-terminal NPXY motif); the interaction induces the opening conformation of KRIT1 and KRIT1 and ITGB1 compete for the same binding site. Isoform 2 does not interact with ITGB1. Interacts with CDC42 (GTP- or GDP-bound form); the interaction is increased with the CDC42-membrane bound forms and prevents both CDC42 activation and cell spreading. Interacts (via C-terminal domain region) with NME2. Interacts with FERMT2 and RAC1. Interacts (via N-terminus and PTB domain) with ROCK1. Post-translationally, phosphorylation at Thr-38 seems to enhance integrin alpha5beta1-mediated cell adhesion. The degree of phosphorylation is regulated by integrin-dependent cell-matrix interaction. In terms of tissue distribution, expressed in the brain.

Its subcellular location is the nucleus. The protein localises to the cytoplasm. The protein resides in the cytoskeleton. It is found in the cell membrane. It localises to the cell projection. Its subcellular location is the lamellipodium. The protein localises to the ruffle. Functionally, key regulator of the integrin-mediated cell-matrix interaction signaling by binding to the ITGB1 cytoplasmic tail and preventing the activation of integrin alpha-5/beta-1 (heterodimer of ITGA5 and ITGB1) by talin or FERMT1. Plays a role in cell proliferation, differentiation, spreading, adhesion and migration in the context of mineralization and bone development and angiogenesis. Stimulates cellular proliferation in a fibronectin-dependent manner. Involved in the regulation of beta-1 integrin-containing focal adhesion (FA) site dynamics by controlling its assembly rate during cell adhesion; inhibits beta-1 integrin clustering within FA by directly competing with talin TLN1, and hence stimulates osteoblast spreading and migration in a fibronectin- and/or collagen-dependent manner. Acts as a guanine nucleotide dissociation inhibitor (GDI) by regulating Rho family GTPases during integrin-mediated cell matrix adhesion; reduces the level of active GTP-bound form of both CDC42 and RAC1 GTPases upon cell adhesion to fibronectin. Stimulates the release of active CDC42 from the membranes to maintain it in an inactive cytoplasmic pool. Participates in the translocation of the Rho-associated protein kinase ROCK1 to membrane ruffles at cell leading edges of the cell membrane, leading to an increase of myoblast cell migration on laminin. Plays a role in bone mineralization at a late stage of osteoblast differentiation; modulates the dynamic formation of focal adhesions into fibrillar adhesions, which are adhesive structures responsible for fibronectin deposition and fibrillogenesis. Plays a role in blood vessel development; acts as a negative regulator of angiogenesis by attenuating endothelial cell proliferation and migration, lumen formation and sprouting angiogenesis by promoting AKT phosphorylation and inhibiting ERK1/2 phosphorylation through activation of the Notch signaling pathway. Promotes transcriptional activity of the MYC promoter. The polypeptide is Integrin beta-1-binding protein 1 (Itgb1bp1) (Mus musculus (Mouse)).